The primary structure comprises 368 residues: Quinolinate synthase (368 aa).

The iminosuccinate site is built by His46 and Ser63. Cys110 contacts [4Fe-4S] cluster. Iminosuccinate contacts are provided by residues 141 to 143 and Ser162; that span reads YVN. Position 230 (Cys230) interacts with [4Fe-4S] cluster. Iminosuccinate contacts are provided by residues 256 to 258 and Thr273; that span reads HPE. Cys320 is a binding site for [4Fe-4S] cluster.

Belongs to the quinolinate synthase family. Type 3 subfamily. Requires [4Fe-4S] cluster as cofactor.

The protein localises to the cytoplasm. The enzyme catalyses iminosuccinate + dihydroxyacetone phosphate = quinolinate + phosphate + 2 H2O + H(+). Its pathway is cofactor biosynthesis; NAD(+) biosynthesis; quinolinate from iminoaspartate: step 1/1. Its function is as follows. Catalyzes the condensation of iminoaspartate with dihydroxyacetone phosphate to form quinolinate. In Bacillus cytotoxicus (strain DSM 22905 / CIP 110041 / 391-98 / NVH 391-98), this protein is Quinolinate synthase.